We begin with the raw amino-acid sequence, 681 residues long: Sorting nexin-41 (681 aa).

Acidic residues predominate over residues 1-12 (MSTDNLFEDIEQ). The disordered stretch occupies residues 1 to 94 (MSTDNLFEDI…HNTSLNNGYP (94 aa)). Residues 13 to 24 (DNNPSFYGNPSI) show a composition bias toward polar residues. In terms of domain architecture, PX spans 113–236 (NDSQLQVDII…KFFDPNYELC (124 aa)). A 1,2-diacyl-sn-glycero-3-phospho-(1D-myo-inositol-3-phosphate) contacts are provided by arginine 151, serine 153, lysine 177, and arginine 200. 2 disordered regions span residues 475 to 505 (LASR…TENF) and 558 to 597 (TATG…QTSI). 2 stretches are compositionally biased toward low complexity: residues 482 to 497 (DNDS…NNND) and 558 to 589 (TATG…QSQS).

It belongs to the sorting nexin family.

The protein resides in the endosome membrane. It is found in the endomembrane system. In terms of biological role, may be required for cytoplasm to vacuole transport (Cvt) and pexophagy. In Candida albicans (strain SC5314 / ATCC MYA-2876) (Yeast), this protein is Sorting nexin-41 (SNX41).